Here is a 321-residue protein sequence, read N- to C-terminus: 2-oxoglutarate-dependent dioxygenase frbH (321 aa).

The tract at residues 77 to 97 (SRNSDTHGYEPVATSTGAQDD) is disordered. One can recognise a Fe2OG dioxygenase domain in the interval 169–273 (ESLSTLSMFR…RFSIAYFLRA (105 aa)). 3 residues coordinate Fe cation: H194, D196, and H251. Residue R264 coordinates 2-oxoglutarate.

Belongs to the iron/ascorbate-dependent oxidoreductase family.

The protein operates within antifungal biosynthesis. Its function is as follows. 2-oxoglutarate-dependent dioxygenase; part of the gene cluster that mediates the biosynthesis of the antifungal antibiotic FR901469, an inhibitor of beta-1,3-glucansynthase, exerting antifungal activity against the pathogenes Candida albicans and Aspergillus fumigatus. FR901469 is a cyclic depsipeptide containing 12 amino acid residues and a fatty acid chain. The NRPS frbI contains 12 modules responsible for the formation of the depsipeptide backbone which is denoted as Acyl-Thr-Ala-Tyr-Val-4OHPro-Thr-Thr-3OHPro-threo3OHGln-Gly-Thr-Orn-OH (C71H116N14O23). The PKS frbB is probably involved in the production of the hydrocarbon chain, and the acyl-CoA ligase frbC might be involved in the transport of the chain to the peptide ptoduct of frbI. Because FR901469 contains 3 hydroxylated amino acid residues, the 3 oxygenases frbA, frbH, and frbJ might be participating in amino acid hydroxylation. As no thioesterase domains were detected in frbI or frbB, the thioesterases frbD and frbE may instead release and cyclize the products of the NRPS and PKS, respectively. This is 2-oxoglutarate-dependent dioxygenase frbH from Dothideomycetidae sp. (strain 11243) (Fungal sp. (strain No.11243)).